A 323-amino-acid chain; its full sequence is Olfactory receptor 4K5 (323 aa).

The Extracellular portion of the chain corresponds to 1–25 (MDKSNSSVVSEFVLLGLCSSQKLQL). Asn5 is a glycosylation site (N-linked (GlcNAc...) asparagine). A helical transmembrane segment spans residues 26–49 (FYFCFFSVLYTVIVLGNLLIILTV). Over 50–57 (TSDTSLHS) the chain is Cytoplasmic. Residues 58–79 (PMYFLLGNLSFVDICQASFATP) traverse the membrane as a helical segment. The Extracellular segment spans residues 80-100 (KMIADFLSAHETISFSGCIAQ). A disulfide bond links Cys97 and Cys189. A helical membrane pass occupies residues 101 to 120 (IFFIHLFTGGEMVLLVSMAY). Residues 121–139 (DRYVAICKPLYYVVIMSRR) lie on the Cytoplasmic side of the membrane. Residues 140–158 (TCTVLVMISWAVSLVHTLS) traverse the membrane as a helical segment. At 159-195 (QLSFTVNLPFCGPNVVDSFFCDLPRVTKLACLDSYII) the chain is on the extracellular side. The helical transmembrane segment at 196–219 (EILIVVNSGILSLSTFSLLVSSYI) threads the bilayer. Over 220–235 (IILVTVWLKSSAAMAK) the chain is Cytoplasmic. Residues 236 to 258 (AFSTLASHIAVVILFFGPCIFIY) traverse the membrane as a helical segment. The Extracellular portion of the chain corresponds to 259 to 269 (VWPFTISPLDK). The helical transmembrane segment at 270 to 289 (FLAIFYTVFTPVLNPIIYTL) threads the bilayer. Over 290 to 323 (RNRDMKAAVRKIVNHYLRPRRISEMSLVVRTSFH) the chain is Cytoplasmic.

This sequence belongs to the G-protein coupled receptor 1 family.

It is found in the cell membrane. Functionally, odorant receptor. The protein is Olfactory receptor 4K5 (OR4K5) of Homo sapiens (Human).